The primary structure comprises 665 residues: Cyclic nucleotide-gated cation channel subunit A (665 aa).

The Cytoplasmic segment spans residues 1–110 (MRHFKVKAMV…DPTLQSHYRW (110 aa)). The chain crosses the membrane as a helical span at residues 111 to 131 (LAIVSLAVLYNIIFVVGRAVF). Residues 132–138 (WEINKSA) lie on the Extracellular side of the membrane. An N-linked (GlcNAc...) asparagine glycan is attached at asparagine 135. The helical transmembrane segment at 139–159 (PAFWYTLDYLCDFIYLLDTLV) threads the bilayer. Topologically, residues 160-186 (HMHEGFLDQGLLVRDAFRLRRHYFHTK) are cytoplasmic. Residues 187 to 207 (GWYLDVLSMLPTDLAYIWWPP) traverse the membrane as a helical segment. Over 208 to 253 (ETCSSLYLPCPVIVRLNRLLRINRLWEWFDRTETATGYPNAFRICK) the chain is Extracellular. Residues 254 to 274 (VVLAILVLIHWNACMYFAISY) form a helical membrane-spanning segment. Residues 275-325 (EIGFSSDSWVYNLNGTRNNTLQRQYIYSFYWSTLTLTTIGETPTPENDVEY) are Cytoplasmic-facing. A helical transmembrane segment spans residues 326–346 (LFVVADFLAGVLIFATIVGNI). At 347-481 (GSMISNMNVA…GKLSVVGDDG (135 aa)) the chain is on the extracellular side. 3',5'-cyclic GMP-binding positions include 437 to 559 (LLEA…DGLL), glutamate 496, and arginine 511. A helical membrane pass occupies residues 482–502 (ITVLATLGAGSVFGEVSVLEI). Topologically, residues 503 to 665 (AGNRTGNRRT…SSDAAKQNTL (163 aa)) are cytoplasmic. The interval 633–665 (RSGRLYSLQPKRRPRSRPDATAKSSDAAKQNTL) is disordered. Residues 654–665 (AKSSDAAKQNTL) show a composition bias toward polar residues.

Belongs to the cyclic nucleotide-gated cation channel (TC 1.A.1.5) family. Expressed in antennae and the visual system.

Its subcellular location is the membrane. Functionally, approximately 50-fold more sensitive to cGMP than to cAMP. May be involved in transduction cascades of both invertebrate photoreceptors and olfactory sensillae. This is Cyclic nucleotide-gated cation channel subunit A (CngA) from Drosophila melanogaster (Fruit fly).